We begin with the raw amino-acid sequence, 342 residues long: Small ribosomal subunit protein uS2 (342 aa).

Residues 235–283 (EENAPFEQDEPRKPSQKPKQNRPENKPRFDKQAPRAAAKPEVKAEVKPE) form a disordered region. Basic and acidic residues predominate over residues 255–283 (NRPENKPRFDKQAPRAAAKPEVKAEVKPE).

This sequence belongs to the universal ribosomal protein uS2 family.

This Acholeplasma laidlawii (strain PG-8A) protein is Small ribosomal subunit protein uS2.